The primary structure comprises 75 residues: DNA-directed RNA polymerase subunit omega (75 aa).

It belongs to the RNA polymerase subunit omega family. In cyanobacteria the RNAP catalytic core is composed of 2 alpha, 1 beta, 1 beta', 1 gamma and 1 omega subunit. When a sigma factor is associated with the core the holoenzyme is formed, which can initiate transcription.

The catalysed reaction is RNA(n) + a ribonucleoside 5'-triphosphate = RNA(n+1) + diphosphate. Functionally, promotes RNA polymerase assembly. Latches the N- and C-terminal regions of the beta' subunit thereby facilitating its interaction with the beta and alpha subunits. The protein is DNA-directed RNA polymerase subunit omega of Prochlorococcus marinus (strain MIT 9211).